A 334-amino-acid polypeptide reads, in one-letter code: MSSAPCHTTVLREPAVDALLARAGPAPAGTWVDATFGRGGHTRLILCRLGPQGRLVAFDKDPEAIAEAMRITDARFSIRHQGFGQLGQLPAGSLAGVLMDLGVSSPQIDSPERGFSFRFDGPLDMRMDTTRGLSAADWLATADAGQIAQVLRDYGEERFAGLIAKAIVARRQARGPLARTAELADLVAGAVKTREPGQNPATRTFQALRIFINAELEELQQALAASLLVLQPGGRLVVLSFHSLEDRIVKQFIARHSRQPFDRRVPFAAPQAMQLLALARVRPDAAEVAANPRARSAIMRVAERTQAHGAERSDMRRAERPDARRAEHGEVLPP.

S-adenosyl-L-methionine-binding positions include 39 to 41 (GGH), D59, F83, D100, and Q107. The tract at residues 303–334 (ERTQAHGAERSDMRRAERPDARRAEHGEVLPP) is disordered.

The protein belongs to the methyltransferase superfamily. RsmH family.

The protein localises to the cytoplasm. It catalyses the reaction cytidine(1402) in 16S rRNA + S-adenosyl-L-methionine = N(4)-methylcytidine(1402) in 16S rRNA + S-adenosyl-L-homocysteine + H(+). Functionally, specifically methylates the N4 position of cytidine in position 1402 (C1402) of 16S rRNA. The chain is Ribosomal RNA small subunit methyltransferase H from Verminephrobacter eiseniae (strain EF01-2).